Reading from the N-terminus, the 88-residue chain is Small ribosomal subunit protein bS20 (88 aa).

The protein belongs to the bacterial ribosomal protein bS20 family.

Functionally, binds directly to 16S ribosomal RNA. The polypeptide is Small ribosomal subunit protein bS20 (Renibacterium salmoninarum (strain ATCC 33209 / DSM 20767 / JCM 11484 / NBRC 15589 / NCIMB 2235)).